The following is a 428-amino-acid chain: MSAFIVLGAQWGDEGKGKMTDYLAENADVVVRFQGGNNAGHTVVVGEKEYKLHLIPSGILYNDKLNVIGNGVVLDPKALFEEINYLESLGVEITPDRLIISDRAHVIMPYHRILDGIKERARGNKDIGTTGKGIGPSYTDKMERSGIRVCDLIHKEVFEENLKETLEVKNKIITEIFGGRALDYNEIYNEYLGYAEKLRPFVKDISVIVNKKIKDGKEVLFEGAQGTLLDIDYGTYPYVTSSSTIAGGVCIGAGVGPTAITNAVGIAKAYTTRVGKGPFPTELLDSTGDWVREKGHEFGVTTGRARRCGWLDLVILKTSARISGLTSFAVTKIDTLAGLDTLKVCTGYRLNGEIIDYVPASLEDLAKCEPIYEEFEGWDDSIANARCYEDLPENAIKYLKKIEDFTETKVSIVSVGPKRDQTMMISEI.

Residues 12-18 (GDEGKGK) and 40-42 (GHT) each bind GTP. The active-site Proton acceptor is Asp-13. 2 residues coordinate Mg(2+): Asp-13 and Gly-40. IMP contacts are provided by residues 13–16 (DEGK), 38–41 (NAGH), Thr-130, Arg-144, Gln-225, Thr-240, and Arg-304. The active-site Proton donor is the His-41. A substrate-binding site is contributed by 300 to 306 (VTTGRAR). Residues Arg-306, 332–334 (KID), and 414–416 (SVG) contribute to the GTP site.

This sequence belongs to the adenylosuccinate synthetase family. Homodimer. The cofactor is Mg(2+).

Its subcellular location is the cytoplasm. It carries out the reaction IMP + L-aspartate + GTP = N(6)-(1,2-dicarboxyethyl)-AMP + GDP + phosphate + 2 H(+). The protein operates within purine metabolism; AMP biosynthesis via de novo pathway; AMP from IMP: step 1/2. In terms of biological role, plays an important role in the de novo pathway of purine nucleotide biosynthesis. Catalyzes the first committed step in the biosynthesis of AMP from IMP. This chain is Adenylosuccinate synthetase, found in Clostridium botulinum (strain ATCC 19397 / Type A).